We begin with the raw amino-acid sequence, 629 residues long: Hemocyanin F chain (629 aa).

Cu cation contacts are provided by His172, His176, His203, His324, His328, and His364. N-linked (GlcNAc...) asparagine glycans are attached at residues Asn395 and Asn447. A compositionally biased stretch (polar residues) spans 503-513 (SESSVTVSHTP). The disordered stretch occupies residues 503–522 (SESSVTVSHTPTFEELQRGE). Residue Asn527 is glycosylated (N-linked (GlcNAc...) asparagine). Cys534 and Cys582 form a disulfide bridge. Asn615 is a glycosylation site (N-linked (GlcNAc...) asparagine).

The protein belongs to the tyrosinase family. Hemocyanin subfamily. In terms of assembly, tarantula hemocyanin is a 24-chain polymer with seven different chains identified. Hemolymph.

It localises to the secreted. Its subcellular location is the extracellular space. In terms of biological role, hemocyanins are copper-containing oxygen carriers occurring freely dissolved in the hemolymph of many mollusks and arthropods. This chain is Hemocyanin F chain (HCF), found in Aphonopelma sp. (American tarantula).